A 244-amino-acid polypeptide reads, in one-letter code: 7-cyano-7-deazaguanine synthase (244 aa).

Phe-14–Val-24 is a binding site for ATP. Zn(2+) contacts are provided by Cys-202, Cys-217, Cys-220, and Cys-223.

The protein belongs to the QueC family. Requires Zn(2+) as cofactor.

The enzyme catalyses 7-carboxy-7-deazaguanine + NH4(+) + ATP = 7-cyano-7-deazaguanine + ADP + phosphate + H2O + H(+). The protein operates within purine metabolism; 7-cyano-7-deazaguanine biosynthesis. Catalyzes the ATP-dependent conversion of 7-carboxy-7-deazaguanine (CDG) to 7-cyano-7-deazaguanine (preQ(0)). The polypeptide is 7-cyano-7-deazaguanine synthase (Burkholderia cenocepacia (strain HI2424)).